A 1184-amino-acid polypeptide reads, in one-letter code: DNA-directed RNA polymerase subunit beta (1184 aa).

A disordered region spans residues 1160–1184 (DDDFTNQNDAFNIVQPENAAAEKTE).

This sequence belongs to the RNA polymerase beta chain family. In terms of assembly, the RNAP catalytic core consists of 2 alpha, 1 beta, 1 beta' and 1 omega subunit. When a sigma factor is associated with the core the holoenzyme is formed, which can initiate transcription.

It carries out the reaction RNA(n) + a ribonucleoside 5'-triphosphate = RNA(n+1) + diphosphate. Functionally, DNA-dependent RNA polymerase catalyzes the transcription of DNA into RNA using the four ribonucleoside triphosphates as substrates. This is DNA-directed RNA polymerase subunit beta from Listeria monocytogenes serotype 4b (strain F2365).